Here is a 97-residue protein sequence, read N- to C-terminus: Defensin alpha 4 (97 aa).

A signal peptide spans 1–19; that stretch reads MRIIAILAAILLVALQVRA. The propeptide occupies 20–63; it reads GPLQARGDEAPGQEQRGPEDQDISISFAWDKSSALQVSGSTRGM. 3 disulfides stabilise this stretch: Cys-65–Cys-93, Cys-67–Cys-82, and Cys-72–Cys-92. A propeptide is located at residue Asp-97.

This sequence belongs to the alpha-defensin family. In terms of assembly, homodimer; homodimerization seems to be required for killing S.aureus, but not E.coli. Interacts with CD4. Interacts with Bacillus anthracis lef; homodimerization is required for the interaction. The three-dimensional structure formed by the three intramolecular disulfide bridges is indispensable for effective bacterial killing.

The protein localises to the secreted. It localises to the cytoplasmic vesicle. Its subcellular location is the secretory vesicle. Functionally, host-defense peptide that has antimicrobial activity against Gram-negative bacteria, and to a lesser extent also against Gram-positive bacteria and fungi. Exhibits antimicrobial activity against Gram-negative E.coli and E.aerogenes and Gram-positive S.faecalis, S.aureus and B.cereus and the yeast C.albicans (in vitro). Inhibits corticotropin (ACTH)-stimulated corticosterone production (in vitro). Inhibits enzymatic activity of B.anthracis lef/anthrax lethal factor (in vitro). This chain is Defensin alpha 4 (DEFA4), found in Pan troglodytes (Chimpanzee).